The sequence spans 110 residues: Large ribosomal subunit protein uL22 (110 aa).

This sequence belongs to the universal ribosomal protein uL22 family. As to quaternary structure, part of the 50S ribosomal subunit.

Functionally, this protein binds specifically to 23S rRNA; its binding is stimulated by other ribosomal proteins, e.g. L4, L17, and L20. It is important during the early stages of 50S assembly. It makes multiple contacts with different domains of the 23S rRNA in the assembled 50S subunit and ribosome. In terms of biological role, the globular domain of the protein is located near the polypeptide exit tunnel on the outside of the subunit, while an extended beta-hairpin is found that lines the wall of the exit tunnel in the center of the 70S ribosome. This Vibrio campbellii (strain ATCC BAA-1116) protein is Large ribosomal subunit protein uL22.